Here is a 153-residue protein sequence, read N- to C-terminus: FAD synthase (153 aa).

Residues 9-10 (TF), 14-17 (HPGH), and Asp-92 each bind ATP.

The protein belongs to the archaeal FAD synthase family. As to quaternary structure, homodimer. A divalent metal cation is required as a cofactor.

The catalysed reaction is FMN + ATP + H(+) = FAD + diphosphate. Its pathway is cofactor biosynthesis; FAD biosynthesis; FAD from FMN: step 1/1. Its function is as follows. Catalyzes the transfer of the AMP portion of ATP to flavin mononucleotide (FMN) to produce flavin adenine dinucleotide (FAD) coenzyme. This chain is FAD synthase, found in Halorubrum lacusprofundi (strain ATCC 49239 / DSM 5036 / JCM 8891 / ACAM 34).